Consider the following 554-residue polypeptide: RecBCD enzyme subunit RecD (554 aa).

155-162 lines the ATP pocket; the sequence is GGPGTGKT.

It belongs to the RecD family. As to quaternary structure, heterotrimer of RecB, RecC and RecD. All subunits contribute to DNA-binding.

The enzyme catalyses Couples ATP hydrolysis with the unwinding of duplex DNA at the replication fork by translocating in the 5'-3' direction. This creates two antiparallel DNA single strands (ssDNA). The leading ssDNA polymer is the template for DNA polymerase III holoenzyme which synthesizes a continuous strand.. It catalyses the reaction ATP + H2O = ADP + phosphate + H(+). Its function is as follows. A helicase/nuclease that prepares dsDNA breaks (DSB) for recombinational DNA repair. Binds to DSBs and unwinds DNA via a highly rapid and processive ATP-dependent bidirectional helicase activity. Holoenzyme degrades any linearized DNA that is unable to undergo homologous recombination. In the holoenzyme this subunit has ssDNA-dependent ATPase and 5'-3' helicase activity. When added to pre-assembled RecBC greatly stimulates nuclease activity and augments holoenzyme processivity. Unlike the case in E.coli, suppresses RecA-dependent homologous recombination, is instead required for single-strand annealing pathway repair of DSB. This Mycolicibacterium smegmatis (strain ATCC 700084 / mc(2)155) (Mycobacterium smegmatis) protein is RecBCD enzyme subunit RecD.